Reading from the N-terminus, the 338-residue chain is MPSNLNIVKVTKPQEENKNFLHKNTNEPNEMEQSQTQEAVTENFTENSNLSANEHAARRGRLNLKTVDHIETYPIVQETEEIAKKIALTRIILAQTKPRIDKVVVSRPVQAVAPVVNFFDKMANSTLSTVERVVPSLKTKTYKRLGEEIALPYTLSKKYGKQLRDTTARNGDNYVYQPVHGRLMKFRKYYNEKFIDTKGKPLIRGQLDPVLLPVNNTFEKVTVKYLPKGKKVPNDSFSCEFNRGLALEYNFMTRAVSAVSHQVVGIAKLPIAYGYHTNSVYNKNLDKQADLKMKNVLRGTWDTITDLEREIWASVTDRSLFRFFGNKSEGGDLPHLVQ.

The segment at 14 to 37 (QEENKNFLHKNTNEPNEMEQSQTQ) is disordered. The segment covering 22-37 (HKNTNEPNEMEQSQTQ) has biased composition (polar residues).

Its function is as follows. Not essential for sporulation. Might be a component of the cell wall. This is Sporulation-specific protein 4 (SPS4) from Saccharomyces cerevisiae (strain ATCC 204508 / S288c) (Baker's yeast).